The following is a 402-amino-acid chain: Putative FBD-associated F-box protein At5g56690 (402 aa).

The 47-residue stretch at 1 to 47 (MAEISGLPDDLLVKILAFLPTKVAISTSVLSKQWRFLWMWLPKLKYD) folds into the F-box domain. Residues 349–401 (SWSKNQGSVPKCFLNSLETFRVKWYYSEEQEDRDFLSLIFKHARCLKSTSILH) form the FBD domain.

The chain is Putative FBD-associated F-box protein At5g56690 from Arabidopsis thaliana (Mouse-ear cress).